A 20-amino-acid polypeptide reads, in one-letter code: Endo-1,6-beta-glucanase (20 aa).

This sequence belongs to the glycosyl hydrolase 5 (cellulase A) family.

It localises to the secreted. The protein resides in the extracellular space. It catalyses the reaction Random hydrolysis of (1-&gt;6)-linkages in (1-&gt;6)-beta-D-glucans.. Its function is as follows. Endo-1,6-beta-glucanase that has highest activity against the beta-1,6-glucan pustulan. Also active against the beta-1,6-glucan lutean. Lower activity against laminarin (beta-1,3-glucan with beta-1,6-branches). Little or no activity against gentiobiose, yeast glucan, lichenin, scleroglucan, curdlan, barley glucan, CM cellulose, HE cellulose, pachyman and pullulan. This Acremonium sp protein is Endo-1,6-beta-glucanase.